The chain runs to 412 residues: Subtilisin-like protease 6 (412 aa).

The first 20 residues, 1–20, serve as a signal peptide directing secretion; sequence MGFITKAIPIVLAALSTVNG. A propeptide spanning residues 21–126 is cleaved from the precursor; sequence ARILEAGPHA…VVRTTTNGTN (106 aa). The region spanning 36–120 is the Inhibitor I9 domain; it reads KYIVVMKREV…FIEPDFVVRT (85 aa). N123 and N126 each carry an N-linked (GlcNAc...) asparagine glycan. The Peptidase S8 domain maps to 135 to 412; sequence SWGLARVGSK…GKLIYNGSGK (278 aa). Catalysis depends on charge relay system residues D167 and H198. 2 N-linked (GlcNAc...) asparagine glycosylation sites follow: N252 and N264. The active-site Charge relay system is S358. N408 carries N-linked (GlcNAc...) asparagine glycosylation.

Belongs to the peptidase S8 family.

Its subcellular location is the secreted. Its function is as follows. Secreted subtilisin-like serine protease with keratinolytic activity that contributes to pathogenicity. The protein is Subtilisin-like protease 6 (SUB6) of Trichophyton rubrum (Athlete's foot fungus).